The following is a 239-amino-acid chain: Mannose-P-dolichol utilization defect 1 protein homolog 1 (239 aa).

Helical transmembrane passes span 25-45, 62-82, 91-111, 123-143, 174-194, and 202-222; these read CLLP…SMTV, LSVV…AYCL, FGEL…IYYF, AILY…PFLF, LSFL…FTSI, and MLLG…QILL. Positions 27 to 93 constitute a PQ-loop 1 domain; sequence LPLISKLLGY…KDLPFSAFGE (67 aa). Positions 150–205 constitute a PQ-loop 2 domain; that stretch reads KHLIFLSARIPQIWKNFRNKSTGQLSFLTCLMNFGGALARVFTSIQEKAPLSMLLG.

The protein belongs to the MPDU1 (TC 2.A.43.3) family.

Its subcellular location is the membrane. The polypeptide is Mannose-P-dolichol utilization defect 1 protein homolog 1 (Arabidopsis thaliana (Mouse-ear cress)).